A 230-amino-acid chain; its full sequence is Ribonuclease 1 (230 aa).

Residues methionine 1 to serine 22 form the signal peptide. Residue glutamine 38 participates in RNA binding. The cysteines at positions 44 and 50 are disulfide-linked. RNA contacts are provided by residues histidine 65, phenylalanine 115, histidine 118–glutamate 119, and lysine 122–histidine 123. Histidine 65 serves as the catalytic Proton donor. 3 disulfide bridges follow: cysteine 80–cysteine 126, cysteine 186–cysteine 221, and cysteine 202–cysteine 213. Glutamate 119 is an active-site residue. Catalysis depends on histidine 123, which acts as the Proton acceptor.

This sequence belongs to the RNase T2 family.

It carries out the reaction a ribonucleotidyl-ribonucleotide-RNA + H2O = a 3'-end 3'-phospho-ribonucleotide-RNA + a 5'-end dephospho-ribonucleoside-RNA + H(+). Its function is as follows. May remobilize phosphate, particularly when cells senesce or when phosphate becomes limiting. The sequence is that of Ribonuclease 1 (RNS1) from Arabidopsis thaliana (Mouse-ear cress).